A 355-amino-acid chain; its full sequence is UDP-3-O-acylglucosamine N-acyltransferase (355 aa).

H248 serves as the catalytic Proton acceptor.

This sequence belongs to the transferase hexapeptide repeat family. LpxD subfamily. As to quaternary structure, homotrimer.

The enzyme catalyses a UDP-3-O-[(3R)-3-hydroxyacyl]-alpha-D-glucosamine + a (3R)-hydroxyacyl-[ACP] = a UDP-2-N,3-O-bis[(3R)-3-hydroxyacyl]-alpha-D-glucosamine + holo-[ACP] + H(+). It functions in the pathway bacterial outer membrane biogenesis; LPS lipid A biosynthesis. Functionally, catalyzes the N-acylation of UDP-3-O-acylglucosamine using 3-hydroxyacyl-ACP as the acyl donor. Is involved in the biosynthesis of lipid A, a phosphorylated glycolipid that anchors the lipopolysaccharide to the outer membrane of the cell. The polypeptide is UDP-3-O-acylglucosamine N-acyltransferase (Syntrophobacter fumaroxidans (strain DSM 10017 / MPOB)).